The primary structure comprises 416 residues: 3-oxoacyl-[acyl-carrier-protein] synthase 1 (416 aa).

Residues 11 to 415 form the Ketosynthase family 3 (KS3) domain; that stretch reads FPSVVVTAVT…GHNVALAFGR (405 aa). Residues Cys171, His311, and His345 each act as for beta-ketoacyl synthase activity in the active site. Substrate-binding residues include His311 and His345.

This sequence belongs to the thiolase-like superfamily. Beta-ketoacyl-ACP synthases family.

The protein localises to the cytoplasm. It catalyses the reaction an ultra-long-chain mono-unsaturated fatty acyl-[ACP] + malonyl-[ACP] + H(+) = a 3-oxo-ultra-long-chain mono-unsaturated fatty acyl-[ACP] + holo-[ACP] + CO2. It participates in lipid metabolism; mycolic acid biosynthesis. Its function is as follows. Part of the mycobacterial fatty acid elongation system FAS-II, which is involved in mycolic acid biosynthesis. Catalyzes the elongation of long chain acyl-ACP substrates by the addition of two carbons from malonyl-ACP to an acyl acceptor. Involved in the initial extension of the mycolate chain and forms monounsaturated fatty acids that averaged 40 carbons in length. This is 3-oxoacyl-[acyl-carrier-protein] synthase 1 (kasA) from Mycobacterium leprae (strain TN).